The chain runs to 383 residues: 23S rRNA (uracil(747)-C(5))-methyltransferase RlmC (383 aa).

[4Fe-4S] cluster-binding residues include cysteine 3, cysteine 11, cysteine 14, and cysteine 89. S-adenosyl-L-methionine-binding residues include glutamine 214, phenylalanine 243, glutamate 270, and asparagine 315. The active-site Nucleophile is the cysteine 342.

The protein belongs to the class I-like SAM-binding methyltransferase superfamily. RNA M5U methyltransferase family. RlmC subfamily.

The catalysed reaction is uridine(747) in 23S rRNA + S-adenosyl-L-methionine = 5-methyluridine(747) in 23S rRNA + S-adenosyl-L-homocysteine + H(+). Its function is as follows. Catalyzes the formation of 5-methyl-uridine at position 747 (m5U747) in 23S rRNA. This chain is 23S rRNA (uracil(747)-C(5))-methyltransferase RlmC, found in Actinobacillus succinogenes (strain ATCC 55618 / DSM 22257 / CCUG 43843 / 130Z).